The sequence spans 375 residues: Aminomethyltransferase (375 aa).

This sequence belongs to the GcvT family. The glycine cleavage system is composed of four proteins: P, T, L and H.

The catalysed reaction is N(6)-[(R)-S(8)-aminomethyldihydrolipoyl]-L-lysyl-[protein] + (6S)-5,6,7,8-tetrahydrofolate = N(6)-[(R)-dihydrolipoyl]-L-lysyl-[protein] + (6R)-5,10-methylene-5,6,7,8-tetrahydrofolate + NH4(+). The glycine cleavage system catalyzes the degradation of glycine. The sequence is that of Aminomethyltransferase from Cupriavidus metallidurans (strain ATCC 43123 / DSM 2839 / NBRC 102507 / CH34) (Ralstonia metallidurans).